We begin with the raw amino-acid sequence, 317 residues long: Metaxin-1 (317 aa).

Glycyl lysine isopeptide (Lys-Gly) (interchain with G-Cter in ubiquitin) cross-links involve residues Lys-38, Lys-41, and Lys-78. The helical transmembrane segment at 164–184 (EELEKELYREARECLTLLSQR) threads the bilayer.

The protein belongs to the metaxin family. As to quaternary structure, interacts with MTX2/metaxin-2. Associates with the mitochondrial contact site and cristae organizing system (MICOS) complex, composed of at least MICOS10/MIC10, CHCHD3/MIC19, CHCHD6/MIC25, APOOL/MIC27, IMMT/MIC60, APOO/MIC23/MIC26 and QIL1/MIC13. This complex was also known under the names MINOS or MitOS complex. The MICOS complex associates with mitochondrial outer membrane proteins SAMM50, MTX1 and MTX2 (together described as components of the mitochondrial outer membrane sorting assembly machinery (SAM) complex) and DNAJC11, mitochondrial inner membrane protein TMEM11 and with HSPA9. The MICOS and SAM complexes together with DNAJC11 are part of a large protein complex spanning both membranes termed the mitochondrial intermembrane space bridging (MIB) complex. Interacts with ARMC1. Post-translationally, ubiquitinated by PRKN during mitophagy, leading to its degradation and enhancement of mitophagy. Deubiquitinated by USP30.

It is found in the mitochondrion outer membrane. Functionally, involved in transport of proteins into the mitochondrion. Essential for embryonic development. The polypeptide is Metaxin-1 (MTX1) (Macaca fascicularis (Crab-eating macaque)).